The chain runs to 89 residues: uncharacterized protein (89 aa).

The protein to Synechocystis PCC 6803 slr1025.

This is an uncharacterized protein from Ureaplasma parvum serovar 3 (strain ATCC 700970).